A 201-amino-acid chain; its full sequence is MSSLEDRDPYALFAEWLEEAGTTEPNDPNAMALATCTPEGRPSLRMVLLKGVIAQADAEGGFIFYTNLESRKGGELLANPHAALCFHWKSLRRQVRVEGPVVAVSDAEADAYFASRHRDSRIGAWASMQSRPLQGRFELERRVAQFAARYAVGAVPRPPHWSGFRVVPEVIEFWHDRPFRLHDRVVYRSEGSGWTHSRLYP.

Residues 45–50 (RMVLLK), 65–66 (YT), Arg-71, Lys-72, and Gln-94 each bind FMN. Residue Lys-50 participates in substrate binding. Substrate contacts are provided by Tyr-112, Arg-116, and Ser-120. Residues 129-130 (QS) and Trp-174 contribute to the FMN site. A substrate-binding site is contributed by 180-182 (RLH). Arg-184 serves as a coordination point for FMN.

The protein belongs to the pyridoxamine 5'-phosphate oxidase family. In terms of assembly, homodimer. It depends on FMN as a cofactor.

The catalysed reaction is pyridoxamine 5'-phosphate + O2 + H2O = pyridoxal 5'-phosphate + H2O2 + NH4(+). It carries out the reaction pyridoxine 5'-phosphate + O2 = pyridoxal 5'-phosphate + H2O2. Its pathway is cofactor metabolism; pyridoxal 5'-phosphate salvage; pyridoxal 5'-phosphate from pyridoxamine 5'-phosphate: step 1/1. It participates in cofactor metabolism; pyridoxal 5'-phosphate salvage; pyridoxal 5'-phosphate from pyridoxine 5'-phosphate: step 1/1. Functionally, catalyzes the oxidation of either pyridoxine 5'-phosphate (PNP) or pyridoxamine 5'-phosphate (PMP) into pyridoxal 5'-phosphate (PLP). The chain is Pyridoxine/pyridoxamine 5'-phosphate oxidase from Rhodospirillum rubrum (strain ATCC 11170 / ATH 1.1.1 / DSM 467 / LMG 4362 / NCIMB 8255 / S1).